The following is a 166-amino-acid chain: NAD(P)H-quinone oxidoreductase subunit I, chloroplastic (166 aa).

4Fe-4S ferredoxin-type domains are found at residues Gly-55–Lys-84 and Leu-95–Glu-124. [4Fe-4S] cluster is bound by residues Cys-64, Cys-67, Cys-70, Cys-74, Cys-104, Cys-107, Cys-110, and Cys-114.

This sequence belongs to the complex I 23 kDa subunit family. NDH is composed of at least 16 different subunits, 5 of which are encoded in the nucleus. It depends on [4Fe-4S] cluster as a cofactor.

It is found in the plastid. It localises to the chloroplast thylakoid membrane. The catalysed reaction is a plastoquinone + NADH + (n+1) H(+)(in) = a plastoquinol + NAD(+) + n H(+)(out). It carries out the reaction a plastoquinone + NADPH + (n+1) H(+)(in) = a plastoquinol + NADP(+) + n H(+)(out). Its function is as follows. NDH shuttles electrons from NAD(P)H:plastoquinone, via FMN and iron-sulfur (Fe-S) centers, to quinones in the photosynthetic chain and possibly in a chloroplast respiratory chain. The immediate electron acceptor for the enzyme in this species is believed to be plastoquinone. Couples the redox reaction to proton translocation, and thus conserves the redox energy in a proton gradient. This chain is NAD(P)H-quinone oxidoreductase subunit I, chloroplastic, found in Chaenactis santolinoides (Santolina pincushion).